Here is a 1052-residue protein sequence, read N- to C-terminus: Membrane-bound transcription factor site-1 protease (1052 aa).

A signal peptide spans 1 to 17; that stretch reads MKLVSTWLLVLVVLLCG. Residues 18 to 186 constitute a propeptide that is removed on maturation; it reads KRHLGDRLGT…TGRHSSRRLL (169 aa). N148 carries N-linked (GlcNAc...) asparagine glycosylation. The residue at position 168 (S168) is a Phosphoserine. Over 187–999 the chain is Lumenal; sequence RAIPRQVAQT…MPGRYNQEVG (813 aa). One can recognise a Peptidase S8 domain in the interval 190 to 472; that stretch reads PRQVAQTLQA…HGKLDLLRAY (283 aa). Residue D218 is the Charge relay system of the active site. An N-linked (GlcNAc...) asparagine glycan is attached at N236. H249 acts as the Charge relay system in catalysis. N-linked (GlcNAc...) asparagine glycosylation occurs at N305. S414 functions as the Charge relay system in the catalytic mechanism. Residues N515 and N728 are each glycosylated (N-linked (GlcNAc...) asparagine). Polar residues predominate over residues 877 to 887; the sequence is PSLSHSGNRQR. The interval 877–900 is disordered; sequence PSLSHSGNRQRPPSGAGLAPPERM. An N-linked (GlcNAc...) asparagine glycan is attached at N939. The helical transmembrane segment at 1000-1022 threads the bilayer; the sequence is QTIPVFAFLGAMVALAFFVVQIS. At 1023–1052 the chain is on the cytoplasmic side; sequence KAKSRPKRRRPRAKRPQLAQQAHPARTPSV. Residues 1026–1037 are compositionally biased toward basic residues; sequence SRPKRRRPRAKR. The disordered stretch occupies residues 1026 to 1052; the sequence is SRPKRRRPRAKRPQLAQQAHPARTPSV.

Belongs to the peptidase S8 family. In terms of assembly, interacts with LYSET; this interaction bridges GNPTAB to MBTPS1. It depends on Ca(2+) as a cofactor. The 148 kDa zymogen is processed progressively into two membrane-bound 120 and 106 kDa forms in the endoplasmic reticulum, and late into a secreted 98 kDa form. The propeptide is autocatalytically removed through an intramolecular cleavage after Leu-186. Further cleavage generates 14, 10, and 8 kDa intermediates.

Its subcellular location is the endoplasmic reticulum membrane. It localises to the golgi apparatus membrane. The enzyme catalyses Processes precursors containing basic and hydrophobic/aliphatic residues at P4 and P2, respectively, with a relatively relaxed acceptance of amino acids at P1 and P3.. Inhibited by divalent copper and zinc ions, but not by nickel or cobalt. Inhibited by its prosegment, but not smaller fragments. Inhibited by 4-(2-aminoethyl)benzenesulfonyl fluoride (AEBSF), a serine protease inhibitor. In terms of biological role, serine protease that cleaves after hydrophobic or small residues, provided that Arg or Lys is in position P4: known substrates include SREBF1/SREBP1, SREBF2/SREBP2, BDNF, GNPTAB, ATF6, ATF6B and FAM20C. Cleaves substrates after Arg-Ser-Val-Leu (SREBP2), Arg-His-Leu-Leu (ATF6), Arg-Gly-Leu-Thr (BDNF) and its own propeptide after Arg-Arg-Leu-Leu. Catalyzes the first step regulated intramembrane proteolysis activation of the sterol regulatory element-binding proteins (SREBPs) SREBF1/SREBP1 and SREBF2/SREBP2. Also mediates the first step of the regulated intramembrane proteolytic activation of the cyclic AMP-dependent transcription factor ATF-6 (ATF6 and ATF6B). Mediates the protein cleavage of GNPTAB into subunit alpha and beta, thereby participating in biogenesis of lysosomes. Cleaves the propeptide from FAM20C which is required for FAM20C secretion from the Golgi apparatus membrane and for enhancement of FAM20C kinase activity, promoting osteoblast differentiation and biomineralization. Involved in the regulation of M6P-dependent Golgi-to-lysosome trafficking of lysosomal enzymes. It is required for the activation of CREB3L2/BBF2H7, a transcriptional activator of MIA3/TANGO and other genes controlling mega vesicle formation. Therefore, it plays a key role in the regulation of mega vesicle-mediated collagen trafficking. In astrocytes and osteoblasts, upon DNA damage and ER stress, mediates the first step of the regulated intramembrane proteolytic activation of the transcription factor CREB3L1, leading to the inhibition of cell-cycle progression. The chain is Membrane-bound transcription factor site-1 protease (Mbtps1) from Mus musculus (Mouse).